The sequence spans 360 residues: MQDFLRQQLERYAQRLEELNFLLSREDIMGDMKQYRAISREHADVTAIAGRYARHRQREADLAAAQDMLSDPDMADMAQEEIASAEAELVQLEDELQRLLLPKDPDDARNAYLEIRAGTGGDESALFAGDLARMYTRHCDAVGWKVEIMSANESELGGYKEVVLRVEGTDVYGRLRFESGGHRVQRVPATETQGRIHTSACTVAVMPEPDETQAITLNPADLRIDTFRASGAGGQHINKTDSAVRVVHLPTGIVAECQDGRSQHSNKAKALQVLQARLQEKERSEREAKEAALRKGLIGSGDRSDRIRTYNFPQGRLTDHRINLTIYKLLAVMEGDLGDVLDALQAAREAELLAELQVNN.

N5-methylglutamine is present on glutamine 235.

This sequence belongs to the prokaryotic/mitochondrial release factor family. In terms of processing, methylated by PrmC. Methylation increases the termination efficiency of RF1.

Its subcellular location is the cytoplasm. Peptide chain release factor 1 directs the termination of translation in response to the peptide chain termination codons UAG and UAA. This Delftia acidovorans (strain DSM 14801 / SPH-1) protein is Peptide chain release factor 1.